A 637-amino-acid polypeptide reads, in one-letter code: Biosynthetic arginine decarboxylase (637 aa).

Lys101 bears the N6-(pyridoxal phosphate)lysine mark. 286–296 (FDVGGGLAVDY) serves as a coordination point for substrate.

This sequence belongs to the Orn/Lys/Arg decarboxylase class-II family. SpeA subfamily. Mg(2+) serves as cofactor. Pyridoxal 5'-phosphate is required as a cofactor.

The enzyme catalyses L-arginine + H(+) = agmatine + CO2. It participates in amine and polyamine biosynthesis; agmatine biosynthesis; agmatine from L-arginine: step 1/1. Functionally, catalyzes the biosynthesis of agmatine from arginine. This is Biosynthetic arginine decarboxylase from Shewanella sediminis (strain HAW-EB3).